The sequence spans 326 residues: Probable cell division protein WhiA (326 aa).

A DNA-binding region (H-T-H motif) is located at residues 275–308; the sequence is SLDELGRLADPVMTKDAIAGRIRRLLAMADKRAL.

This sequence belongs to the WhiA family.

Functionally, involved in cell division and chromosome segregation. The chain is Probable cell division protein WhiA from Pseudarthrobacter chlorophenolicus (strain ATCC 700700 / DSM 12829 / CIP 107037 / JCM 12360 / KCTC 9906 / NCIMB 13794 / A6) (Arthrobacter chlorophenolicus).